A 457-amino-acid chain; its full sequence is Bifunctional protein GlmU (457 aa).

Positions Met1–Arg232 are pyrophosphorylase. UDP-N-acetyl-alpha-D-glucosamine is bound by residues Leu9–Gly12, Lys23, Gln75, and Gly80–Thr81. Asp105 contributes to the Mg(2+) binding site. Positions 142, 157, 172, and 230 each coordinate UDP-N-acetyl-alpha-D-glucosamine. Residue Asn230 coordinates Mg(2+). Positions Val233–Ala253 are linker. The tract at residues Gly254–Lys457 is N-acetyltransferase. Residues Arg336 and Lys354 each contribute to the UDP-N-acetyl-alpha-D-glucosamine site. The active-site Proton acceptor is His366. Positions 369 and 380 each coordinate UDP-N-acetyl-alpha-D-glucosamine. Residues Asn389–Tyr390, Ser408, Ala426, and Arg443 contribute to the acetyl-CoA site.

It in the N-terminal section; belongs to the N-acetylglucosamine-1-phosphate uridyltransferase family. The protein in the C-terminal section; belongs to the transferase hexapeptide repeat family. Homotrimer. Mg(2+) serves as cofactor.

The protein resides in the cytoplasm. The enzyme catalyses alpha-D-glucosamine 1-phosphate + acetyl-CoA = N-acetyl-alpha-D-glucosamine 1-phosphate + CoA + H(+). It carries out the reaction N-acetyl-alpha-D-glucosamine 1-phosphate + UTP + H(+) = UDP-N-acetyl-alpha-D-glucosamine + diphosphate. It participates in nucleotide-sugar biosynthesis; UDP-N-acetyl-alpha-D-glucosamine biosynthesis; N-acetyl-alpha-D-glucosamine 1-phosphate from alpha-D-glucosamine 6-phosphate (route II): step 2/2. The protein operates within nucleotide-sugar biosynthesis; UDP-N-acetyl-alpha-D-glucosamine biosynthesis; UDP-N-acetyl-alpha-D-glucosamine from N-acetyl-alpha-D-glucosamine 1-phosphate: step 1/1. It functions in the pathway bacterial outer membrane biogenesis; LPS lipid A biosynthesis. In terms of biological role, catalyzes the last two sequential reactions in the de novo biosynthetic pathway for UDP-N-acetylglucosamine (UDP-GlcNAc). The C-terminal domain catalyzes the transfer of acetyl group from acetyl coenzyme A to glucosamine-1-phosphate (GlcN-1-P) to produce N-acetylglucosamine-1-phosphate (GlcNAc-1-P), which is converted into UDP-GlcNAc by the transfer of uridine 5-monophosphate (from uridine 5-triphosphate), a reaction catalyzed by the N-terminal domain. This Geotalea daltonii (strain DSM 22248 / JCM 15807 / FRC-32) (Geobacter daltonii) protein is Bifunctional protein GlmU.